Reading from the N-terminus, the 427-residue chain is Endothelin-1 receptor (427 aa).

The first 20 residues, 1 to 20, serve as a signal peptide directing secretion; it reads MSIFCLAAYFWLTMVGGVMA. Residues 21–80 lie on the Extracellular side of the membrane; sequence DNPERYSANLSSHMEDFTPFPGTEINFLGTTHRPPNLALPSNGSMHGYCPQQTKITTAFK. N-linked (GlcNAc...) asparagine glycans are attached at residues Asn29 and Asn62. A helical membrane pass occupies residues 81–102; that stretch reads YINTVISCTIFIVGMVGNATLL. The Cytoplasmic portion of the chain corresponds to 103–112; that stretch reads RIIYQNKCMR. The helical transmembrane segment at 113 to 132 threads the bilayer; that stretch reads NGPNALIASLALGDLIYVVI. Topologically, residues 133-159 are extracellular; that stretch reads DLPINVFKLLAGRWPFDHNDFGVFLCK. A disulfide bond links Cys158 and Cys239. The chain crosses the membrane as a helical span at residues 160–181; that stretch reads LFPFLQKSSVGITVLNLCALSV. Residues 182 to 205 lie on the Cytoplasmic side of the membrane; the sequence is DRYRAVASWSRVQGIGIPLITAIE. A helical membrane pass occupies residues 206-229; that stretch reads IVSIWILSFILAIPEAIGFVMVPF. Over 230–256 the chain is Extracellular; it reads EYKGELHRTCMLNATSKFMEFYQDVKD. N-linked (GlcNAc...) asparagine glycosylation is present at Asn242. Residues 257–278 form a helical membrane-spanning segment; it reads WWLFGFYFCMPLVCTAIFYTLM. Residues 279-306 lie on the Cytoplasmic side of the membrane; the sequence is TCEMLNRRNGSLRIALSEHLKQRREVAK. Residues 307 to 328 form a helical membrane-spanning segment; that stretch reads TVFCLVVIFALCWFPLHLSRIL. Topologically, residues 329–347 are extracellular; that stretch reads KKTVYDEMDKNRCELLSFL. A helical membrane pass occupies residues 348–372; the sequence is LLMDYIGINLATMNSCINPIALYFV. The Cytoplasmic portion of the chain corresponds to 373–427; that stretch reads SKKFKNCFQSCLCCCCHQSKSLMTSVPMNGTSIQWKNQEQNNHNTERSSHKDSMN. The segment at 408–427 is disordered; sequence KNQEQNNHNTERSSHKDSMN. Over residues 416-427 the composition is skewed to basic and acidic residues; it reads NTERSSHKDSMN. Ser425 carries the phosphoserine modification.

The protein belongs to the G-protein coupled receptor 1 family. Endothelin receptor subfamily. EDNRA sub-subfamily. Interacts with HDAC7 and KAT5.

It is found in the cell membrane. Functionally, receptor for endothelin-1. Mediates its action by association with G proteins that activate a phosphatidylinositol-calcium second messenger system. The rank order of binding affinities for ET-A is: ET1 &gt; ET2 &gt;&gt; ET3. This is Endothelin-1 receptor from Mus musculus (Mouse).